A 520-amino-acid polypeptide reads, in one-letter code: CUGBP Elav-like family member 4 (520 aa).

RRM domains are found at residues 47 to 128, 135 to 215, and 435 to 513; these read IKLF…PADS, RKLF…FADT, and CNLF…LKRP.

This sequence belongs to the CELF/BRUNOL family.

It localises to the nucleus. Its subcellular location is the cytoplasm. Its function is as follows. RNA-binding protein that may be implicated in the regulation of pre-mRNA alternative splicing. This is CUGBP Elav-like family member 4 (celf4) from Danio rerio (Zebrafish).